The sequence spans 584 residues: 2-isopropylmalate synthase (584 aa).

One can recognise a Pyruvate carboxyltransferase domain in the interval 40–314; sequence PRWCAVDLRD…DPQIDFSDIE (275 aa). Positions 49, 253, 255, and 289 each coordinate Mg(2+). Residues 456 to 584 are regulatory domain; it reads SRDGSGSTWG…VRDAQEAAQD (129 aa).

The protein belongs to the alpha-IPM synthase/homocitrate synthase family. LeuA type 2 subfamily. As to quaternary structure, homodimer. It depends on Mg(2+) as a cofactor.

It localises to the cytoplasm. The catalysed reaction is 3-methyl-2-oxobutanoate + acetyl-CoA + H2O = (2S)-2-isopropylmalate + CoA + H(+). It participates in amino-acid biosynthesis; L-leucine biosynthesis; L-leucine from 3-methyl-2-oxobutanoate: step 1/4. In terms of biological role, catalyzes the condensation of the acetyl group of acetyl-CoA with 3-methyl-2-oxobutanoate (2-ketoisovalerate) to form 3-carboxy-3-hydroxy-4-methylpentanoate (2-isopropylmalate). This chain is 2-isopropylmalate synthase, found in Kocuria rhizophila (strain ATCC 9341 / DSM 348 / NBRC 103217 / DC2201).